Here is a 333-residue protein sequence, read N- to C-terminus: 6-phosphogluconolactonase (333 aa).

It belongs to the cycloisomerase 2 family.

The enzyme catalyses 6-phospho-D-glucono-1,5-lactone + H2O = 6-phospho-D-gluconate + H(+). It functions in the pathway carbohydrate degradation; pentose phosphate pathway; D-ribulose 5-phosphate from D-glucose 6-phosphate (oxidative stage): step 2/3. Its function is as follows. Catalyzes the hydrolysis of 6-phosphogluconolactone to 6-phosphogluconate. This is 6-phosphogluconolactonase from Buchnera aphidicola subsp. Schizaphis graminum (strain Sg).